The following is a 228-amino-acid chain: Probable methylthioribulose-1-phosphate dehydratase (228 aa).

Cys-87 is a binding site for substrate. Zn(2+)-binding residues include His-105 and His-107. Glu-129 (proton donor/acceptor) is an active-site residue. Zn(2+) is bound at residue His-185.

This sequence belongs to the aldolase class II family. MtnB subfamily. The cofactor is Zn(2+).

The protein localises to the cytoplasm. It carries out the reaction 5-(methylsulfanyl)-D-ribulose 1-phosphate = 5-methylsulfanyl-2,3-dioxopentyl phosphate + H2O. The protein operates within amino-acid biosynthesis; L-methionine biosynthesis via salvage pathway; L-methionine from S-methyl-5-thio-alpha-D-ribose 1-phosphate: step 2/6. Functionally, catalyzes the dehydration of methylthioribulose-1-phosphate (MTRu-1-P) into 2,3-diketo-5-methylthiopentyl-1-phosphate (DK-MTP-1-P). This chain is Probable methylthioribulose-1-phosphate dehydratase, found in Drosophila willistoni (Fruit fly).